A 348-amino-acid chain; its full sequence is Anthranilate phosphoribosyltransferase (348 aa).

Residues Gly93, 96-97, Thr101, 103-106, 121-129, and Ser133 contribute to the 5-phospho-alpha-D-ribose 1-diphosphate site; these read GD, NVST, and KHGNRAVSS. Gly93 serves as a coordination point for anthranilate. Ser105 lines the Mg(2+) pocket. Residue Asn124 coordinates anthranilate. Arg179 serves as a coordination point for anthranilate. Positions 238 and 239 each coordinate Mg(2+).

It belongs to the anthranilate phosphoribosyltransferase family. Homodimer. Mg(2+) serves as cofactor.

It carries out the reaction N-(5-phospho-beta-D-ribosyl)anthranilate + diphosphate = 5-phospho-alpha-D-ribose 1-diphosphate + anthranilate. It functions in the pathway amino-acid biosynthesis; L-tryptophan biosynthesis; L-tryptophan from chorismate: step 2/5. Functionally, catalyzes the transfer of the phosphoribosyl group of 5-phosphorylribose-1-pyrophosphate (PRPP) to anthranilate to yield N-(5'-phosphoribosyl)-anthranilate (PRA). This is Anthranilate phosphoribosyltransferase from Desulfotalea psychrophila (strain LSv54 / DSM 12343).